The following is a 535-amino-acid chain: MATLSDGLFDDMSVLGVIGYVLEQTRFIFLVPILKRLVNLCQVVSVLLFVDAAYMAIVVAIVKLLGRTPQKVLKWESFKSDDIELAPSSNHPMVLIQIPIFNEKEVCQLSIGAACKLSWPLDRMIIQVLDDSTEEESQKLVRLECKKWESEGITIKSEVRGGFREGFKAGALTAGMKHSYVDEYKCEFVVIFDADFQPEPDFLERTVPFLVHNPEIALVQAGWKYGNADECCMTRIQEMSLNYHFAVEQKSGSSILGFFGFNGTAGVWRIKALNEAEGWKDRTIVEDMDLAVRAYLRGSKFVYVDDVKVKNELPSSFQAYRFQQHRWSCGPANLFKKIAMEIIKNQNVSLWKKVYLIYNFFFLRKIVVHIFTFVFYCVILPATVIFPEIEVPKWTTIYIPATITILNAIATPKSFYLILYWILFENVMAMHRSIGTLIGLLETSRVKEWIVTQKLGESNNLRENLIFPDHYSFPERLRWREIMVGMYLFICGYYDFVFGRTYLYVYLFLQSIAFFVVGVGYVGMPVPSTPVQTSE.

A helical membrane pass occupies residues 42-62 (QVVSVLLFVDAAYMAIVVAIV). Residue Asp131 is part of the active site. The substrate site is built by Asp193 and Asp195. Asp287 is a catalytic residue. The next 4 membrane-spanning stretches (helical) occupy residues 366-386 (IVVH…TVIF), 403-423 (ITIL…YWIL), 482-502 (IMVG…GRTY), and 503-523 (LYVY…GYVG).

Belongs to the glycosyltransferase 2 family. Plant cellulose synthase-like A subfamily.

It localises to the golgi apparatus membrane. It carries out the reaction GDP-mannose + (glucomannan)n = GDP + (glucomannan)n+1.. Its function is as follows. Probable mannan synthase which consists of a 4-beta-mannosyltransferase activity on mannan using GDP-mannose. The beta-1,4-mannan product is the backbone for galactomannan synthesis by galactomannan galactosyltransferase. Galactomannan is a noncellulosic polysaccharides of plant cell wall. The sequence is that of Probable glucomannan 4-beta-mannosyltransferase 14 from Arabidopsis thaliana (Mouse-ear cress).